We begin with the raw amino-acid sequence, 423 residues long: Lipoyl synthase 1, mitochondrial (423 aa).

Residues Cys-127, Cys-132, Cys-138, Cys-159, Cys-163, Cys-166, and Ser-375 each coordinate [4Fe-4S] cluster. Positions 142 to 364 (DEEEGTATAT…EEEAMAMGFL (223 aa)) constitute a Radical SAM core domain.

Belongs to the radical SAM superfamily. Lipoyl synthase family. [4Fe-4S] cluster serves as cofactor.

The protein resides in the mitochondrion. The enzyme catalyses [[Fe-S] cluster scaffold protein carrying a second [4Fe-4S](2+) cluster] + N(6)-octanoyl-L-lysyl-[protein] + 2 oxidized [2Fe-2S]-[ferredoxin] + 2 S-adenosyl-L-methionine + 4 H(+) = [[Fe-S] cluster scaffold protein] + N(6)-[(R)-dihydrolipoyl]-L-lysyl-[protein] + 4 Fe(3+) + 2 hydrogen sulfide + 2 5'-deoxyadenosine + 2 L-methionine + 2 reduced [2Fe-2S]-[ferredoxin]. The protein operates within protein modification; protein lipoylation via endogenous pathway; protein N(6)-(lipoyl)lysine from octanoyl-[acyl-carrier-protein]: step 2/2. Its function is as follows. Catalyzes the radical-mediated insertion of two sulfur atoms into the C-6 and C-8 positions of the octanoyl moiety bound to the lipoyl domains of lipoate-dependent enzymes, thereby converting the octanoylated domains into lipoylated derivatives. The polypeptide is Lipoyl synthase 1, mitochondrial (Trypanosoma cruzi (strain CL Brener)).